The primary structure comprises 935 residues: Coiled-coil domain-containing protein 191 (935 aa).

Coiled-coil stretches lie at residues Arg-189–Gln-324, Tyr-366–Lys-438, Arg-554–Gln-589, and Lys-660–Ile-740. Disordered regions lie at residues Ser-596–Ala-661 and Glu-678–Glu-715.

The sequence is that of Coiled-coil domain-containing protein 191 (CCDC191) from Macaca fascicularis (Crab-eating macaque).